An 83-amino-acid polypeptide reads, in one-letter code: Hainantoxin-III 5 (83 aa).

Residues 1–21 (MKASRFLALAGLVLLFVVGYA) form the signal peptide. Residues 22-48 (SESEEKEFPRELLSKIFAVDDFKGEER) constitute a propeptide that is removed on maturation. 3 disulfide bridges follow: C50–C65, C57–C70, and C64–C77. L81 is modified (leucine amide).

It belongs to the neurotoxin 10 (Hwtx-1) family. 15 (Hntx-3) subfamily. In terms of assembly, monomer. As to expression, expressed by the venom gland.

It is found in the secreted. In terms of biological role, selective antagonist of neuronal tetrodotoxin (TTX)-sensitive voltage-gated sodium channels (IC(50)=1270 nM on Nav1.1/SCN1A, 270 nM on Nav1.2/SCN2A, 491 nM on Nav1.3/SCN3A and 232 nM on Nav1.7/SCN9A). This toxin suppress Nav1.7 current amplitude without significantly altering the activation, inactivation, and repriming kinetics. Short extreme depolarizations partially activate the toxin-bound channel, indicating voltage-dependent inhibition of this toxin. This toxin increases the deactivation of the Nav1.7 current after extreme depolarizations. The toxin-Nav1.7 complex is gradually dissociated upon prolonged strong depolarizations in a voltage-dependent manner, and the unbound toxin rebinds to Nav1.7 after a long repolarization. Moreover, analysis of chimeric channels showed that the DIIS3-S4 linker is critical for toxin binding to Nav1.7. These data are consistent with this toxin interacting with Nav1.7 site 4 and trapping the domain II voltage sensor in the closed state. The polypeptide is Hainantoxin-III 5 (Cyriopagopus hainanus (Chinese bird spider)).